The primary structure comprises 214 residues: FMN-dependent NADH:quinone oxidoreductase 1 (214 aa).

FMN-binding positions include 17–19 (SWS) and 144–147 (SAGG).

It belongs to the azoreductase type 1 family. As to quaternary structure, homodimer. FMN serves as cofactor.

The enzyme catalyses 2 a quinone + NADH + H(+) = 2 a 1,4-benzosemiquinone + NAD(+). It catalyses the reaction N,N-dimethyl-1,4-phenylenediamine + anthranilate + 2 NAD(+) = 2-(4-dimethylaminophenyl)diazenylbenzoate + 2 NADH + 2 H(+). Functionally, quinone reductase that provides resistance to thiol-specific stress caused by electrophilic quinones. Its function is as follows. Also exhibits azoreductase activity. Catalyzes the reductive cleavage of the azo bond in aromatic azo compounds to the corresponding amines. The protein is FMN-dependent NADH:quinone oxidoreductase 1 of Lactococcus lactis subsp. lactis (strain IL1403) (Streptococcus lactis).